The chain runs to 202 residues: Ribosomal RNA small subunit methyltransferase G (202 aa).

Residues Gly-75, Phe-80, 125-126 (VQ), and Arg-139 each bind S-adenosyl-L-methionine.

It belongs to the methyltransferase superfamily. RNA methyltransferase RsmG family.

It localises to the cytoplasm. Specifically methylates the N7 position of a guanine in 16S rRNA. The protein is Ribosomal RNA small subunit methyltransferase G of Mesomycoplasma hyopneumoniae (strain 7448) (Mycoplasma hyopneumoniae).